A 365-amino-acid chain; its full sequence is Aminomethyltransferase (365 aa).

The protein belongs to the GcvT family. In terms of assembly, the glycine cleavage system is composed of four proteins: P, T, L and H.

The catalysed reaction is N(6)-[(R)-S(8)-aminomethyldihydrolipoyl]-L-lysyl-[protein] + (6S)-5,6,7,8-tetrahydrofolate = N(6)-[(R)-dihydrolipoyl]-L-lysyl-[protein] + (6R)-5,10-methylene-5,6,7,8-tetrahydrofolate + NH4(+). Functionally, the glycine cleavage system catalyzes the degradation of glycine. This Desulfitobacterium hafniense (strain DSM 10664 / DCB-2) protein is Aminomethyltransferase.